The sequence spans 155 residues: UPF0251 protein Paes_1249 (155 aa).

It belongs to the UPF0251 family.

This is UPF0251 protein Paes_1249 from Prosthecochloris aestuarii (strain DSM 271 / SK 413).